The following is a 391-amino-acid chain: Glycerol-3-phosphate dehydrogenase [NAD(+)] (391 aa).

NAD(+) is bound by residues 46-51 (GSGNWG), F78, and F134. Residue K157 participates in substrate binding. Position 190 (A190) interacts with NAD(+). K250 functions as the Proton acceptor in the catalytic mechanism. Residues R315 and Q344 each coordinate NAD(+). Residue 315-316 (RN) participates in substrate binding.

The protein belongs to the NAD-dependent glycerol-3-phosphate dehydrogenase family.

The catalysed reaction is sn-glycerol 3-phosphate + NAD(+) = dihydroxyacetone phosphate + NADH + H(+). The protein is Glycerol-3-phosphate dehydrogenase [NAD(+)] (GPD) of Candida tropicalis (Yeast).